A 518-amino-acid chain; its full sequence is Glutamate--cysteine ligase (518 aa).

It belongs to the glutamate--cysteine ligase type 1 family. Type 1 subfamily.

It catalyses the reaction L-cysteine + L-glutamate + ATP = gamma-L-glutamyl-L-cysteine + ADP + phosphate + H(+). It functions in the pathway sulfur metabolism; glutathione biosynthesis; glutathione from L-cysteine and L-glutamate: step 1/2. The polypeptide is Glutamate--cysteine ligase (Shigella flexneri serotype 5b (strain 8401)).